The chain runs to 467 residues: Uronate isomerase (467 aa).

It belongs to the metallo-dependent hydrolases superfamily. Uronate isomerase family.

It catalyses the reaction D-glucuronate = D-fructuronate. The catalysed reaction is aldehydo-D-galacturonate = keto-D-tagaturonate. It functions in the pathway carbohydrate metabolism; pentose and glucuronate interconversion. The chain is Uronate isomerase from Geobacillus thermodenitrificans (strain NG80-2).